The sequence spans 416 residues: Dihydrolipoyllysine-residue succinyltransferase component of 2-oxoglutarate dehydrogenase complex (416 aa).

Residues 3–78 enclose the Lipoyl-binding domain; the sequence is IVDVKVPQLS…VADEIIAKID (76 aa). Position 44 is an N6-lipoyllysine (Lys44). Positions 115–152 constitute a Peripheral subunit-binding (PSBD) domain; it reads VAMPSAAKLMAEAGLSAGQVAGTGKDGRITKGDALAAA. Residues His387 and Asp391 contribute to the active site.

It belongs to the 2-oxoacid dehydrogenase family. Forms a 24-polypeptide structural core with octahedral symmetry. Part of the 2-oxoglutarate dehydrogenase (OGDH) complex composed of E1 (2-oxoglutarate dehydrogenase), E2 (dihydrolipoamide succinyltransferase) and E3 (dihydrolipoamide dehydrogenase); the complex contains multiple copies of the three enzymatic components (E1, E2 and E3). The cofactor is (R)-lipoate.

It carries out the reaction N(6)-[(R)-dihydrolipoyl]-L-lysyl-[protein] + succinyl-CoA = N(6)-[(R)-S(8)-succinyldihydrolipoyl]-L-lysyl-[protein] + CoA. It functions in the pathway amino-acid degradation; L-lysine degradation via saccharopine pathway; glutaryl-CoA from L-lysine: step 6/6. Its function is as follows. E2 component of the 2-oxoglutarate dehydrogenase (OGDH) complex which catalyzes the second step in the conversion of 2-oxoglutarate to succinyl-CoA and CO(2). This is Dihydrolipoyllysine-residue succinyltransferase component of 2-oxoglutarate dehydrogenase complex (sucB) from Cupriavidus necator (strain ATCC 17699 / DSM 428 / KCTC 22496 / NCIMB 10442 / H16 / Stanier 337) (Ralstonia eutropha).